Reading from the N-terminus, the 547-residue chain is Sodium/hydrogen exchanger 9B2 (547 aa).

A disordered region spans residues 1–68 (MEDEDKTAEC…PQDSPTEPNG (68 aa)). Over 1–86 (MEDEDKTAEC…ACPPRGCLAR (86 aa)) the chain is Cytoplasmic. Residues 23–45 (APPHHELQEERVMSLRGTDRSEP) are compositionally biased toward basic and acidic residues. The residue at position 49 (serine 49) is a Phosphoserine. Residues 87 to 104 (VITNGTMVVLLWAMVWSV) form a helical membrane-spanning segment. The Extracellular portion of the chain corresponds to 105–113 (TGPECLPGG). Residues 114–133 (NLFGIIILFYCSITGGKLFG) traverse the membrane as a helical segment. Topologically, residues 134–144 (LIKFPTLPPLP) are cytoplasmic. The helical transmembrane segment at 145 to 161 (PLLGMLLAGFLLRNIPV) threads the bilayer. At 162–171 (INDSVRIQHK) the chain is on the extracellular side. A helical membrane pass occupies residues 172 to 189 (WSSSLRSIALSVILVRAG). At 190–200 (LGLDSKALRKL) the chain is on the cytoplasmic side. A helical transmembrane segment spans residues 201–227 (KGVCVRLAMGPCIVEACASAILSHFLM). Residues 228–233 (GLPWQW) are Extracellular-facing. Residues 234–242 (GFILGFVVG) form a helical membrane-spanning segment. The Cytoplasmic portion of the chain corresponds to 243 to 270 (AVSPAVVVPSMLLLQEGGYGVGKGIPTL). Na(+) is bound by residues valine 244, glycine 275, aspartate 278, and aspartate 279. A helical transmembrane segment spans residues 271–290 (LMAAGSFDDILAITGFNTCL). Over 291–300 (GVAFSTGSTV) the chain is Extracellular. The chain crosses the membrane as a helical span at residues 301–324 (FNIFRGILEVVIGVAAGSFLGFFI). The Cytoplasmic portion of the chain corresponds to 325–339 (QYFPSRDQDNLVWKR). Residues 340 to 357 (AFLVLGFAVLAVFSSVYF) traverse the membrane as a helical segment. Residues 358-361 (SFPG) are Extracellular-facing. The helical transmembrane segment at 362-373 (SGGLCTLVMAFL) threads the bilayer. Residues 374–390 (AGMRWTDKKSEVEKVIA) are Cytoplasmic-facing. The chain crosses the membrane as a helical span at residues 391-411 (VTWDVFQPLLFGLIGAEVSIV). The Extracellular portion of the chain corresponds to 412–417 (SLRAET). A helical transmembrane segment spans residues 418-440 (VGLCVATLSIAVLIRILTTFLMV). Residues 441 to 461 (CFAGFNIKEKIFISFAWLPKA) lie on the Cytoplasmic side of the membrane. Residues 462 to 473 (TVQAAIGSVALD) form a helical membrane-spanning segment. Residues 474–486 (TARSHGEKQLEDY) lie on the Extracellular side of the membrane. A helical transmembrane segment spans residues 487-509 (GMDVLTVAFLAILITAPIGSLLI). Residues 510-547 (GLLGPRVLQKSEHRTEEEVQGETSAHIQRKPEDSITEA) lie on the Cytoplasmic side of the membrane. The disordered stretch occupies residues 522-547 (HRTEEEVQGETSAHIQRKPEDSITEA). Residues 538 to 547 (RKPEDSITEA) show a composition bias toward basic and acidic residues.

It belongs to the monovalent cation:proton antiporter 1 (CPA1) transporter (TC 2.A.36) family. In terms of assembly, homodimer; dimerization is essential for SLC9B2 activity. Lipids seem to play a role in the stabilization of the dimerization subdomain. Widely expressed. However expression seems to be restricted to specific cell types within individual organs, e.g. osteoclasts in the bone, distal tubules of the kidney or beta-cells of Langerhans islets. In sperm specifically present in the principal piece of sperm tail (at protein level).

It is found in the cell membrane. Its subcellular location is the mitochondrion membrane. The protein localises to the endosome membrane. The protein resides in the lysosome membrane. It localises to the recycling endosome membrane. It is found in the cytoplasmic vesicle. Its subcellular location is the secretory vesicle. The protein localises to the synaptic vesicle membrane. The protein resides in the cell projection. It localises to the cilium. It is found in the flagellum membrane. Its subcellular location is the basolateral cell membrane. The protein localises to the apical cell membrane. The enzyme catalyses Na(+)(in) + H(+)(out) = Na(+)(out) + H(+)(in). It carries out the reaction Li(+)(out) + H(+)(in) = Li(+)(in) + H(+)(out). It catalyses the reaction Li(+)(in) + Na(+)(out) = Li(+)(out) + Na(+)(in). Allosterically inhibited by the N-terminal domain. Inhibited by phloretin. In terms of biological role, electroneutral Na(+) Li(+)/H(+) antiporter that extrudes Na(+) or Li(+) in exchange for external protons across the membrane. Uses the proton gradient/membrane potential to extrude sodium. Contributes to the regulation of intracellular pH and sodium homeostasis. Also able to mediate Na(+)/Li(+) antiporter activity in kidney. May play a physiological role in renal tubular function and blood pressure homeostasis. Plays an important role for insulin secretion and clathrin-mediated endocytosis in beta-cells. Involved in sperm motility and fertility. It is controversial whether SLC9B2 plays a role in osteoclast differentiation or not. The polypeptide is Sodium/hydrogen exchanger 9B2 (Mus musculus (Mouse)).